Here is a 224-residue protein sequence, read N- to C-terminus: Elongation factor 1-beta 2 (224 aa).

Position 2 is an N-acetylalanine (alanine 2). A GST C-terminal domain is found at 14–65 (VKSVEEHLAGKTYISGDQLSVDDVKVYAAVPVKPSDAFPNASKWYESVASQL). The interval 89–139 (EAEAPAAAADDDDDMDLFGDETEEEKKAAEEREAAKKDTKKPKESGKSSVL) is disordered. The segment covering 97–111 (ADDDDDMDLFGDETE) has biased composition (acidic residues). Residues 112–134 (EEKKAAEEREAAKKDTKKPKESG) show a composition bias toward basic and acidic residues.

It belongs to the EF-1-beta/EF-1-delta family. As to quaternary structure, EF-1 is composed of 4 subunits: alpha, beta (1B-alpha=beta'), delta (1B-beta), and gamma (1B-gamma).

In terms of biological role, EF-1-beta and EF-1-delta stimulate the exchange of GDP bound to EF-1-alpha to GTP. The sequence is that of Elongation factor 1-beta 2 from Arabidopsis thaliana (Mouse-ear cress).